Here is a 146-residue protein sequence, read N- to C-terminus: Putative pre-16S rRNA nuclease (146 aa).

It belongs to the YqgF nuclease family.

It is found in the cytoplasm. Could be a nuclease involved in processing of the 5'-end of pre-16S rRNA. This chain is Putative pre-16S rRNA nuclease, found in Paraburkholderia phytofirmans (strain DSM 17436 / LMG 22146 / PsJN) (Burkholderia phytofirmans).